The chain runs to 663 residues: DNA topoisomerase 4 subunit B (663 aa).

ATP contacts are provided by residues tyrosine 7, asparagine 47, aspartate 74, 114 to 120 (GLHGVGA), and lysine 341. The interval 386 to 418 (REAARKAREDARSGKKNKRKDTLLSGKLTPAQS) is disordered. Residues 387-398 (EAARKAREDARS) show a composition bias toward basic and acidic residues. Residues 424–538 (NELYLVEGDS…AGRVFIALPP (115 aa)) enclose the Toprim domain. Mg(2+) contacts are provided by glutamate 430, aspartate 503, and aspartate 505.

Belongs to the type II topoisomerase family. ParE type 2 subfamily. In terms of assembly, heterotetramer composed of ParC and ParE. It depends on Mg(2+) as a cofactor. Mn(2+) serves as cofactor. Ca(2+) is required as a cofactor.

It carries out the reaction ATP-dependent breakage, passage and rejoining of double-stranded DNA.. Topoisomerase IV is essential for chromosome segregation. It relaxes supercoiled DNA. Performs the decatenation events required during the replication of a circular DNA molecule. This chain is DNA topoisomerase 4 subunit B, found in Staphylococcus aureus (strain MRSA252).